A 765-amino-acid polypeptide reads, in one-letter code: Dipeptidyl peptidase 4 (765 aa).

Over 1–6 the chain is Cytoplasmic; it reads MKTPWK. Residues 7–29 form a helical; Signal-anchor for type II membrane protein membrane-spanning segment; sequence VLLGLLGLAALITIITVPVVLLN. The Extracellular portion of the chain corresponds to 30–765; sequence KGNDAAADSR…HFIKQCFSLP (736 aa). Residues Asn-84, Asn-91, Asn-149, Asn-178, Asn-228, Asn-280, Asn-320, Asn-330, and Asn-331 are each glycosylated (N-linked (GlcNAc...) asparagine). Intrachain disulfides connect Cys-384-Cys-393, Cys-443-Cys-446, and Cys-453-Cys-471. Asn-519 is a glycosylation site (N-linked (GlcNAc...) asparagine). Ser-629 (charge relay system) is an active-site residue. An intrachain disulfide couples Cys-648 to Cys-761. N-linked (GlcNAc...) asparagine glycosylation occurs at Asn-684. Catalysis depends on charge relay system residues Asp-707 and His-739.

This sequence belongs to the peptidase S9B family. DPPIV subfamily. Monomer. Homodimer. Heterodimer with Seprase (FAP). Requires homodimerization for optimal dipeptidyl peptidase activity and T-cell costimulation. Found in a membrane raft complex, at least composed of BCL10, CARD11, DPP4 and IKBKB. Associates with collagen. Interacts with PTPRC; the interaction is enhanced in an interleukin-12-dependent manner in activated lymphocytes. Interacts (extracellular domain) with ADA; does not inhibit its dipeptidyl peptidase activity. Interacts with CAV1 (via the N-terminus); the interaction is direct. Interacts (via cytoplasmic tail) with CARD11 (via PDZ domain); its homodimerization is necessary for interaction with CARD11. Interacts with IGF2R; the interaction is direct. Interacts with GPC3. Post-translationally, the soluble form (Dipeptidyl peptidase 4 soluble form also named SDPP) derives from the membrane form (Dipeptidyl peptidase 4 membrane form also named MDPP) by proteolytic processing. In terms of processing, N- and O-Glycosylated. Phosphorylated. Mannose 6-phosphate residues in the carbohydrate moiety are necessary for interaction with IGF2R in activated T-cells. Mannose 6-phosphorylation is induced during T-cell activation.

It localises to the secreted. Its subcellular location is the cell membrane. The protein localises to the apical cell membrane. The protein resides in the cell projection. It is found in the invadopodium membrane. It localises to the lamellipodium membrane. Its subcellular location is the cell junction. The protein localises to the membrane raft. It catalyses the reaction Release of an N-terminal dipeptide, Xaa-Yaa-|-Zaa-, from a polypeptide, preferentially when Yaa is Pro, provided Zaa is neither Pro nor hydroxyproline.. Inhibited by GPC3 and diprotin A. Functionally, cell surface glycoprotein receptor involved in the costimulatory signal essential for T-cell receptor (TCR)-mediated T-cell activation. Acts as a positive regulator of T-cell coactivation, by binding at least ADA, CAV1, IGF2R, and PTPRC. Its binding to CAV1 and CARD11 induces T-cell proliferation and NF-kappa-B activation in a T-cell receptor/CD3-dependent manner. Its interaction with ADA also regulates lymphocyte-epithelial cell adhesion. In association with FAP is involved in the pericellular proteolysis of the extracellular matrix (ECM), the migration and invasion of endothelial cells into the ECM. May be involved in the promotion of lymphatic endothelial cells adhesion, migration and tube formation. When overexpressed, enhanced cell proliferation, a process inhibited by GPC3. Also acts as a serine exopeptidase with a dipeptidyl peptidase activity that regulates various physiological processes by cleaving peptides in the circulation, including many chemokines, mitogenic growth factors, neuropeptides and peptide hormones. Removes N-terminal dipeptides sequentially from polypeptides having unsubstituted N-termini provided that the penultimate residue is proline. The chain is Dipeptidyl peptidase 4 (DPP4) from Felis catus (Cat).